The sequence spans 273 residues: Ribosomal RNA small subunit methyltransferase A (273 aa).

Residues asparagine 18, leucine 20, glycine 45, glutamate 66, aspartate 91, and asparagine 113 each coordinate S-adenosyl-L-methionine.

This sequence belongs to the class I-like SAM-binding methyltransferase superfamily. rRNA adenine N(6)-methyltransferase family. RsmA subfamily.

It localises to the cytoplasm. The enzyme catalyses adenosine(1518)/adenosine(1519) in 16S rRNA + 4 S-adenosyl-L-methionine = N(6)-dimethyladenosine(1518)/N(6)-dimethyladenosine(1519) in 16S rRNA + 4 S-adenosyl-L-homocysteine + 4 H(+). Specifically dimethylates two adjacent adenosines (A1518 and A1519) in the loop of a conserved hairpin near the 3'-end of 16S rRNA in the 30S particle. May play a critical role in biogenesis of 30S subunits. In Shigella boydii serotype 4 (strain Sb227), this protein is Ribosomal RNA small subunit methyltransferase A.